Here is a 474-residue protein sequence, read N- to C-terminus: Ribulose bisphosphate carboxylase large chain (474 aa).

Residues asparagine 123 and threonine 173 each coordinate substrate. Lysine 175 (proton acceptor) is an active-site residue. Residue lysine 177 coordinates substrate. Positions 201, 203, and 204 each coordinate Mg(2+). The residue at position 201 (lysine 201) is an N6-carboxylysine. Residue histidine 293 is the Proton acceptor of the active site. Substrate-binding residues include arginine 294, histidine 326, and serine 378.

This sequence belongs to the RuBisCO large chain family. Type I subfamily. As to quaternary structure, heterohexadecamer of 8 large chains and 8 small chains; disulfide-linked. The disulfide link is formed within the large subunit homodimers. The cofactor is Mg(2+). Post-translationally, the disulfide bond which can form in the large chain dimeric partners within the hexadecamer appears to be associated with oxidative stress and protein turnover.

The protein resides in the carboxysome. The enzyme catalyses 2 (2R)-3-phosphoglycerate + 2 H(+) = D-ribulose 1,5-bisphosphate + CO2 + H2O. It catalyses the reaction D-ribulose 1,5-bisphosphate + O2 = 2-phosphoglycolate + (2R)-3-phosphoglycerate + 2 H(+). RuBisCO catalyzes two reactions: the carboxylation of D-ribulose 1,5-bisphosphate, the primary event in carbon dioxide fixation, as well as the oxidative fragmentation of the pentose substrate in the photorespiration process. Both reactions occur simultaneously and in competition at the same active site. In Synechococcus sp, this protein is Ribulose bisphosphate carboxylase large chain.